Here is a 1176-residue protein sequence, read N- to C-terminus: Chromosome partition protein Smc (1176 aa).

32 to 39 contacts ATP; sequence PNGCGKSN. The stretch at 169-506 forms a coiled coil; sequence GVSRYKERRR…VKLQEDVQKQ (338 aa). Residues 521–623 enclose the SMC hinge domain; that stretch reads LGRLWQKLHI…TAPDLGQALA (103 aa). 2 coiled-coil regions span residues 653–947 and 987–1024; these read DSEQ…LAAM and ERKE…LQAT.

Belongs to the SMC family. In terms of assembly, homodimer.

The protein localises to the cytoplasm. Required for chromosome condensation and partitioning. In Bordetella petrii (strain ATCC BAA-461 / DSM 12804 / CCUG 43448), this protein is Chromosome partition protein Smc.